A 737-amino-acid chain; its full sequence is Transcription termination factor Rho (737 aa).

Residues 1-396 (MSGPCSAHRV…ENSYLPDPTD (396 aa)) form a disordered region. Composition is skewed to low complexity over residues 16–28 (RPTI…TRSS), 62–86 (ASRA…GSDA), and 101–111 (DAESAPTAADT). 4 stretches are compositionally biased toward basic and acidic residues: residues 145-175 (PRAE…HESR), 196-256 (SMER…DRRD), 266-279 (GRPD…DRHQ), and 286-324 (DRSH…DRGG). A compositionally biased stretch (basic residues) spans 328 to 339 (RNGRRGRNRFRR). The span at 347–360 (APISGSHAPSQGSP) shows a compositional bias: polar residues. The Rho RNA-BD domain occupies 367 to 439 (EGTMAGWFDP…IEVQTLNDGS (73 aa)). Basic and acidic residues predominate over residues 376–387 (PSRDGGFLRRPE). Residues 487–492 (GYGQRA), 499–504 (RAGKTT), and Arg530 contribute to the ATP site.

It belongs to the Rho family. In terms of assembly, homohexamer. The homohexamer assembles into an open ring structure.

Its function is as follows. Facilitates transcription termination by a mechanism that involves Rho binding to the nascent RNA, activation of Rho's RNA-dependent ATPase activity, and release of the mRNA from the DNA template. In Gemmatimonas aurantiaca (strain DSM 14586 / JCM 11422 / NBRC 100505 / T-27), this protein is Transcription termination factor Rho.